We begin with the raw amino-acid sequence, 237 residues long: DNA repair protein RecO (237 aa).

This sequence belongs to the RecO family.

Involved in DNA repair and RecF pathway recombination. This is DNA repair protein RecO from Flavobacterium johnsoniae (strain ATCC 17061 / DSM 2064 / JCM 8514 / BCRC 14874 / CCUG 350202 / NBRC 14942 / NCIMB 11054 / UW101) (Cytophaga johnsonae).